Here is a 252-residue protein sequence, read N- to C-terminus: MRKKKFLSRFAFGSLFLLCGTILSACTGIQADLRNLIKEATGKDIDLSKSIKTTDGKKNIITSSKKSYEVNPKDTTKLLLEAWKQSFEEGKLGIAELAFDQATNPTKNSDFKMERKVEYFNMEYKSFSDFSVNARLSYIFNWYGSYFGEKSFTANNGGKHNFDLFLSIKSHSKKQFTEKSFIVKDENFQDQDKSQQIITEWIQLDLSLIWSLKGQDELSRKSLDKIFLKDYITYSANEKQINLFTYLQHLIK.

The N-terminal stretch at 1-25 (MRKKKFLSRFAFGSLFLLCGTILSA) is a signal peptide. Cysteine 26 is lipidated: N-palmitoyl cysteine. A lipid anchor (S-diacylglycerol cysteine) is attached at cysteine 26.

Belongs to the MG439/MG440 family.

It is found in the cell membrane. This is an uncharacterized protein from Mycoplasma pneumoniae (strain ATCC 29342 / M129 / Subtype 1) (Mycoplasmoides pneumoniae).